The primary structure comprises 428 residues: Light-independent protochlorophyllide reductase subunit N (428 aa).

The [4Fe-4S] cluster site is built by cysteine 29, cysteine 54, and cysteine 115.

The protein belongs to the BchN/ChlN family. As to quaternary structure, protochlorophyllide reductase is composed of three subunits; BchL, BchN and BchB. Forms a heterotetramer of two BchB and two BchN subunits. [4Fe-4S] cluster serves as cofactor.

The enzyme catalyses chlorophyllide a + oxidized 2[4Fe-4S]-[ferredoxin] + 2 ADP + 2 phosphate = protochlorophyllide a + reduced 2[4Fe-4S]-[ferredoxin] + 2 ATP + 2 H2O. It functions in the pathway porphyrin-containing compound metabolism; bacteriochlorophyll biosynthesis (light-independent). Component of the dark-operative protochlorophyllide reductase (DPOR) that uses Mg-ATP and reduced ferredoxin to reduce ring D of protochlorophyllide (Pchlide) to form chlorophyllide a (Chlide). This reaction is light-independent. The NB-protein (BchN-BchB) is the catalytic component of the complex. The chain is Light-independent protochlorophyllide reductase subunit N from Cereibacter sphaeroides (strain ATCC 17025 / ATH 2.4.3) (Rhodobacter sphaeroides).